Reading from the N-terminus, the 1013-residue chain is MAEASERLYRVEYAKSGRASCKKCSESIPKDSLRMAIMVQSPMFDGKVPHWYHFSCFWKVGHSIRQPDVEVDGFSELRWDDQQKVKKTAEAGGVAGKGQDGSGGKSEKTLGDFAAEYAKSNRSTCKGCMEKIEKGQVRLSKKMLDPEKPQLGMIDRWYHPTCFVKNREELGFRPEYSASQLKGFSLLSAEDKEVLKKQLPGVKSEGKRKGDEVDGADEVAKKKSKKGKDKDSKLEKALKAQNDLIWNIKDELKKACSTSDLKELLIFNQQQVPSGESAILDRVADGMAFGALLPCKECSGQLVFKSDAYYCTGDVTAWTKCMVKTQTPSRKEWVTPKEFREISYLKKLKVKKQDRIFPPETSAPAPPHLPPSVTSAPTAVNSSCPADKPLSNMKILTLGKLSQSKDEAKATIEKLGGKLTGSANNASLCISTKKEVEKMGKKMEEVQAANVRVVCEDFLQDVAASTKSLQELLSAHSLSSWGAEVKVEPVEVAAPKGKSAAPSKKSKGLYKEEGVNKSEKRMKLTLKGGAAVDPDSGLEHSAHVLEKGGKVFSATLGLVDIVKGTNSYYKLQLLEDDKESRYWIFRSWGRVGTVIGSNKLEQMPSKEDAVEHFMKLYEEKTGNAWHSKNFTKYPKKFYPLEIDYGQDEEAVKKLTVKPGTKSKLPKAVQELVGMIFDVESMKKALVEYEIDLQKMPLGKLSKRQIQAAYSILSEVQQAVSQGSSDSQILDLSNRFYTLIPHDFGMKKPPLLNNADSVQAKVEMLDNLLDIEVAYSLLRGGSDDSSKDPIDVNYEKLKTDIKVVDRDSEEAEVIRKYVKNTHATTHNAYDLEVMDIFKIEREGESQRYKPFKQLHNRRLLWHGSRTTNFAGILSQGLRIAPPEAPVTGYMFGKGIYFADMVSKSANYCHTSQGDPIGLILLGEVALGNMYELKHASHISKLPKGKHSVKGLGKTTPDPSASITLEGVEVPLGTGIPSGVNDTCLLYNEYIVYDIAQVNLKYLLKLKFNFKTSLW.

Alanine 2 carries the post-translational modification N-acetylalanine. The segment at tyrosine 9–glycine 93 adopts a PARP-type 1 zinc-finger fold. Zn(2+) is bound by residues cysteine 21 and cysteine 24. Serine 41 is modified (phosphoserine). Positions 53 and 56 each coordinate Zn(2+). Residues lysine 97 and lysine 105 each carry the N6-acetyllysine modification. The segment at phenylalanine 113 to lysine 203 adopts a PARP-type 2 zinc-finger fold. Cysteine 125 and cysteine 128 together coordinate Zn(2+). Position 131 is an N6-acetyllysine (lysine 131). 2 residues coordinate Zn(2+): histidine 159 and cysteine 162. Residues serine 177, serine 179, and serine 185 each carry the phosphoserine modification. Residue lysine 192 forms a Glycyl lysine isopeptide (Lys-Gly) (interchain with G-Cter in SUMO2) linkage. The segment at glutamine 198–lysine 233 is disordered. Residue lysine 203 forms a Glycyl lysine isopeptide (Lys-Gly) (interchain with G-Cter in SUMO1); alternate linkage. Residue lysine 203 forms a Glycyl lysine isopeptide (Lys-Gly) (interchain with G-Cter in SUMO2); alternate linkage. Short sequence motifs (nuclear localization signal) lie at residues lysine 207–lysine 209 and lysine 221–lysine 226. The PADR1 zinc-binding domain maps to lysine 225 to proline 359. Residue lysine 249 forms a Glycyl lysine isopeptide (Lys-Gly) (interchain with G-Cter in SUMO2) linkage. 2 positions are modified to phosphoserine: serine 274 and serine 277. Residues glycine 290 to glutamate 332 are zinc ribbon. Zn(2+)-binding residues include cysteine 295, cysteine 298, cysteine 311, and cysteine 321. Residues phenylalanine 357–serine 383 form a disordered region. The segment covering serine 372–serine 383 has biased composition (polar residues). The automodification domain stretch occupies residues valine 373–lysine 523. The 92-residue stretch at proline 385–histidine 476 folds into the BRCT domain. The residue at position 387 (aspartate 387) is a PolyADP-ribosyl aspartic acid. 7 positions are modified to polyADP-ribosyl glutamic acid: glutamate 407, glutamate 413, glutamate 435, glutamate 437, glutamate 444, glutamate 445, and glutamate 456. Lysine 467 participates in a covalent cross-link: Glycyl lysine isopeptide (Lys-Gly) (interchain with G-Cter in SUMO2). PolyADP-ribosyl glutamic acid is present on residues glutamate 471 and glutamate 484. Lysine 486 participates in a covalent cross-link: Glycyl lysine isopeptide (Lys-Gly) (interchain with G-Cter in SUMO1); alternate. A Glycyl lysine isopeptide (Lys-Gly) (interchain with G-Cter in SUMO2); alternate cross-link involves residue lysine 486. PolyADP-ribosyl glutamic acid is present on residues glutamate 488 and glutamate 491. The segment at proline 495–asparagine 516 is disordered. 3 positions are modified to ADP-ribosylserine: serine 499, serine 503, and serine 506. A Glycyl lysine isopeptide (Lys-Gly) (interchain with G-Cter in SUMO2) cross-link involves residue lysine 511. 2 positions are modified to polyADP-ribosyl glutamic acid: glutamate 512 and glutamate 513. Serine 518 carries the post-translational modification ADP-ribosylserine. Glutamate 519 is subject to PolyADP-ribosyl glutamic acid. Lysine 520 bears the N6-(ADP-ribosyl)lysine mark. A Glycyl lysine isopeptide (Lys-Gly) (interchain with G-Cter in SUMO2) cross-link involves residue lysine 527. The region spanning serine 541–phenylalanine 637 is the WGR domain. At threonine 593 the chain carries Phosphothreonine. 2 positions are modified to N6-acetyllysine: lysine 599 and lysine 620. The PARP alpha-helical domain occupies lysine 661–arginine 778. Residue lysine 747 forms a Glycyl lysine isopeptide (Lys-Gly) (interchain with G-Cter in SUMO1); alternate linkage. Lysine 747 participates in a covalent cross-link: Glycyl lysine isopeptide (Lys-Gly) (interchain with G-Cter in SUMO2); alternate. A phosphoserine mark is found at serine 781 and serine 785. In terms of domain architecture, PARP catalytic spans aspartate 787–tryptophan 1013. Residues histidine 861–serine 863, glycine 870, arginine 877, and serine 903 contribute to the NAD(+) site. Glutamate 987 acts as the For poly [ADP-ribose] polymerase activity in catalysis.

This sequence belongs to the ARTD/PARP family. In terms of assembly, homodimer; PARP-type zinc-fingers from separate PARP1 molecules form a dimer module that specifically recognizes DNA strand breaks. Heterodimer; heterodimerizes with PARP2. Interacts (via the PARP catalytic domain) with HPF1. Interacts with NMNAT1. Interacts with nucleosomes; with a preference for nucleosomes containing H2A.X. Interacts with APTX. Component of a base excision repair (BER) complex, containing at least XRCC1, PARP1, PARP2, POLB and LRIG3. Interacts with SRY. The SWAP complex consists of NPM1, NCL, PARP1 and SWAP70. Interacts with TIAM2. Interacts with PARP3; leading to activate PARP1 in absence of DNA. Interacts (when poly-ADP-ribosylated) with CHD1L (via macro domain). Interacts with the DNA polymerase alpha catalytic subunit POLA1; this interaction functions as part of the control of replication fork progression. Interacts with EEF1A1 and TXK. Interacts with RNF4. Interacts with RNF146. Interacts with ZNF423. Interacts with APLF. Interacts with SNAI1 (via zinc fingers); the interaction requires SNAI1 to be poly-ADP-ribosylated and non-phosphorylated (active) by GSK3B. Interacts (when poly-ADP-ribosylated) with PARP9. Interacts with NR4A3; activates PARP1 by improving acetylation of PARP1 and suppressing the interaction between PARP1 and SIRT1. Interacts (via catalytic domain) with PUM3; the interaction inhibits the poly-ADP-ribosylation activity of PARP1 and the degradation of PARP1 by CASP3 following genotoxic stress. Interacts with ZNF365. Interacts with RRP1B. Interacts with TIMELESS; the interaction is direct. Interacts with CGAS; leading to impede the formation of the PARP1-TIMELESS complex. Interacts with KHDC3L, the interaction is increased following the formation of DNA double-strand breaks. Interacts (when auto-poly-ADP-ribosylated) with XRCC1; leading to inhibit PARP1 ADP-ribosyltransferase activity. Interacts with SPINDOC; promoting PARP1 ADP-ribosyltransferase activity. Interacts with BANF1; leading to inhibit PARP1 ADP-ribosyltransferase activity in response to oxidative DNA damage. Interacts (when sumoylated and ubiquitinated) with VCP/p97; leading to its extraction from chromatin. Interacts with YARS1; promoting PARP1 ADP-ribosyltransferase activity. Interacts with PACMP micropeptide; Interacts with PACMP micropeptide; interaction. Interacts (when poly-ADP-ribosylated) with isoform 1 of MACROH2A1; MACROH2A1 specifically binds to poly-ADP-ribose chains and inhibits PARP1 activity, limiting the consumption of nuclear NAD(+). Interacts with CARM1; promoting recruitment to replication forks. Interacts with RECQL. Interacts with ZNF32; the interaction reshapes ZNF432 interacting proteins. Interacts with TPRN; TPRN interacts with a number of DNA damage response proteins, is recruited to sites of DNA damage and may play a role in DNA damage repair. As to quaternary structure, interacts (when auto-poly-ADP-ribosylated) with AIFM1. Post-translationally, poly-ADP-ribosylated on serine, glutamate and aspartate residues by autocatalysis. Auto-ADP-ribosylation on serine takes place following interaction with HPF1. Auto poly-ADP-ribosylation on serine residues promotes its dissociation from chromatin. Poly-ADP-ribosylated by PARP2; poly-ADP-ribosylation mediates the recruitment of CHD1L to DNA damage sites. Mono-ADP-ribosylated at Lys-520 by SIRT6 in response to oxidative stress, promoting recruitment to double-strand breaks (DSBs) sites. S-nitrosylated, leading to inhibit transcription regulation activity. In terms of processing, phosphorylated at Thr-593 by PRKDC in response to DNA damage following virus infection, promoting its translocation to the cytosol. Phosphorylated by TXK. Post-translationally, proteolytically cleaved by caspase-3 (CASP3) and caspase-7 (CASP7) in response to apoptosis to generate the Poly [ADP-ribose] polymerase 1, processed N-terminus and Poly [ADP-ribose] polymerase 1, processed C-terminus forms. Sumoylated with SUMO1 or SUMO2 by PIAS4 following prolonged residence (trapping) to chromatin. Sumoylation promotes ubiquitination by RNF4 and removal from chromatin by VCP/p97. In terms of processing, ubiquitinated by RNF4 following sumoylation by PIAS4 in response to prolonged residence (trapping) to chromatin. Ubiquitination promotes removal from chromatin by VCP/p97.

It is found in the chromosome. It localises to the nucleus. The protein resides in the nucleolus. Its subcellular location is the cytoplasm. The protein localises to the cytosol. The enzyme catalyses NAD(+) + (ADP-D-ribosyl)n-acceptor = nicotinamide + (ADP-D-ribosyl)n+1-acceptor + H(+).. The catalysed reaction is L-seryl-[protein] + NAD(+) = O-(ADP-D-ribosyl)-L-seryl-[protein] + nicotinamide + H(+). It catalyses the reaction L-aspartyl-[protein] + NAD(+) = 4-O-(ADP-D-ribosyl)-L-aspartyl-[protein] + nicotinamide. It carries out the reaction L-glutamyl-[protein] + NAD(+) = 5-O-(ADP-D-ribosyl)-L-glutamyl-[protein] + nicotinamide. The enzyme catalyses L-tyrosyl-[protein] + NAD(+) = O-(ADP-D-ribosyl)-L-tyrosyl-[protein] + nicotinamide + H(+). The catalysed reaction is L-histidyl-[protein] + NAD(+) = N(tele)-(ADP-D-ribosyl)-L-histidyl-[protein] + nicotinamide + H(+). ADP-ribosyltransferase activity is regulated via an allosteric activation mechanism. In absence of activation signal, PARP1 is autoinhibited by the PARP alpha-helical domain (also named HD region), which prevents effective NAD(+)-binding. Activity is highly stimulated by signals, such as DNA strand breaks. Binding to damaged DNA unfolds the PARP alpha-helical domain, relieving autoinhibition. Poly-ADP-ribosyltransferase activity is tightly regulated and PARP1 is removed from damaged chromatin following initial poly-ADP-ribosylation of chromatin to avoid prolonged residence (trapping) that has cytotoxic consequences. A number of factors (VCP/p97) or post-translational modifications (auto-poly-ADP-ribosylation or ubiquitination) promote PARP1 removal from chromatin. Its function is as follows. Poly-ADP-ribosyltransferase that mediates poly-ADP-ribosylation of proteins and plays a key role in DNA repair. Mediates glutamate, aspartate, serine, histidine or tyrosine ADP-ribosylation of proteins: the ADP-D-ribosyl group of NAD(+) is transferred to the acceptor carboxyl group of target residues and further ADP-ribosyl groups are transferred to the 2'-position of the terminal adenosine moiety, building up a polymer with an average chain length of 20-30 units. Serine ADP-ribosylation of proteins constitutes the primary form of ADP-ribosylation of proteins in response to DNA damage. Specificity for the different amino acids is conferred by interacting factors, such as HPF1 and NMNAT1. Following interaction with HPF1, catalyzes serine ADP-ribosylation of target proteins; HPF1 confers serine specificity by completing the PARP1 active site. Also catalyzes tyrosine ADP-ribosylation of target proteins following interaction with HPF1. Following interaction with NMNAT1, catalyzes glutamate and aspartate ADP-ribosylation of target proteins; NMNAT1 confers glutamate and aspartate specificity. PARP1 initiates the repair of DNA breaks: recognizes and binds DNA breaks within chromatin and recruits HPF1, licensing serine ADP-ribosylation of target proteins, such as histones (H2BS6ADPr and H3S10ADPr), thereby promoting decompaction of chromatin and the recruitment of repair factors leading to the reparation of DNA strand breaks. HPF1 initiates serine ADP-ribosylation but restricts the polymerase activity of PARP1 in order to limit the length of poly-ADP-ribose chains. In addition to base excision repair (BER) pathway, also involved in double-strand breaks (DSBs) repair: together with TIMELESS, accumulates at DNA damage sites and promotes homologous recombination repair by mediating poly-ADP-ribosylation. Mediates the poly-ADP-ribosylation of a number of proteins, including itself, APLF, CHFR and NFAT5. In addition to proteins, also able to ADP-ribosylate DNA: catalyzes ADP-ribosylation of DNA strand break termini containing terminal phosphates and a 2'-OH group in single- and double-stranded DNA, respectively. Required for PARP9 and DTX3L recruitment to DNA damage sites. PARP1-dependent PARP9-DTX3L-mediated ubiquitination promotes the rapid and specific recruitment of 53BP1/TP53BP1, UIMC1/RAP80, and BRCA1 to DNA damage sites. PARP1-mediated DNA repair in neurons plays a role in sleep: senses DNA damage in neurons and promotes sleep, facilitating efficient DNA repair. In addition to DNA repair, also involved in other processes, such as transcription regulation, programmed cell death, membrane repair, adipogenesis and innate immunity. Acts as a repressor of transcription: binds to nucleosomes and modulates chromatin structure in a manner similar to histone H1, thereby altering RNA polymerase II. Acts both as a positive and negative regulator of transcription elongation, depending on the context. Acts as a positive regulator of transcription elongation by mediating poly-ADP-ribosylation of NELFE, preventing RNA-binding activity of NELFE and relieving transcription pausing. Acts as a negative regulator of transcription elongation in response to DNA damage by catalyzing poly-ADP-ribosylation of CCNT1, disrupting the phase separation activity of CCNT1 and subsequent activation of CDK9. Involved in replication fork progression following interaction with CARM1: mediates poly-ADP-ribosylation at replication forks, slowing fork progression. Poly-ADP-ribose chains generated by PARP1 also play a role in poly-ADP-ribose-dependent cell death, a process named parthanatos. Also acts as a negative regulator of the cGAS-STING pathway. Acts by mediating poly-ADP-ribosylation of CGAS: PARP1 translocates into the cytosol following phosphorylation by PRKDC and catalyzes poly-ADP-ribosylation and inactivation of CGAS. Acts as a negative regulator of adipogenesis: catalyzes poly-ADP-ribosylation of histone H2B on 'Glu-35' (H2BE35ADPr) following interaction with NMNAT1, inhibiting phosphorylation of H2B at 'Ser-36' (H2BS36ph), thereby blocking expression of pro-adipogenetic genes. Involved in the synthesis of ATP in the nucleus, together with NMNAT1, PARG and NUDT5. Nuclear ATP generation is required for extensive chromatin remodeling events that are energy-consuming. In terms of biological role, promotes AIFM1-mediated apoptosis. This form, which translocates into the cytoplasm following cleavage by caspase-3 (CASP3) and caspase-7 (CASP7) in response to apoptosis, is auto-poly-ADP-ribosylated and serves as a poly-ADP-ribose carrier to induce AIFM1-mediated apoptosis. This cleavage form irreversibly binds to DNA breaks and interferes with DNA repair, promoting DNA damage-induced apoptosis. This Cricetulus griseus (Chinese hamster) protein is Poly [ADP-ribose] polymerase 1 (PARP1).